Reading from the N-terminus, the 62-residue chain is Large ribosomal subunit protein bL28 (62 aa).

The protein belongs to the bacterial ribosomal protein bL28 family.

This chain is Large ribosomal subunit protein bL28, found in Clostridioides difficile (strain 630) (Peptoclostridium difficile).